We begin with the raw amino-acid sequence, 292 residues long: Protease HtpX (292 aa).

Helical transmembrane passes span isoleucine 4–leucine 24 and isoleucine 32–isoleucine 52. Residue histidine 139 coordinates Zn(2+). The active site involves glutamate 140. Histidine 143 contributes to the Zn(2+) binding site. 2 helical membrane-spanning segments follow: residues glycine 147–serine 167 and phenylalanine 193–isoleucine 213. Residue glutamate 222 participates in Zn(2+) binding.

This sequence belongs to the peptidase M48B family. Zn(2+) serves as cofactor.

Its subcellular location is the cell membrane. The chain is Protease HtpX from Buchnera aphidicola subsp. Acyrthosiphon pisum (strain 5A).